The sequence spans 238 residues: RNA pyrophosphohydrolase (238 aa).

Residues Gly6–Ser149 form the Nudix hydrolase domain. Residues Gly38–Gly59 carry the Nudix box motif. The tract at residues Ala161–Leu238 is disordered. Residues Pro171–Arg181 show a composition bias toward basic and acidic residues. Over residues Arg188–Pro199 the composition is skewed to polar residues. The segment covering Val204–Ser217 has biased composition (low complexity).

This sequence belongs to the Nudix hydrolase family. RppH subfamily. The cofactor is a divalent metal cation.

Functionally, accelerates the degradation of transcripts by removing pyrophosphate from the 5'-end of triphosphorylated RNA, leading to a more labile monophosphorylated state that can stimulate subsequent ribonuclease cleavage. The polypeptide is RNA pyrophosphohydrolase (Ralstonia nicotianae (strain ATCC BAA-1114 / GMI1000) (Ralstonia solanacearum)).